Reading from the N-terminus, the 208-residue chain is Cysteine-rich protein 2 (208 aa).

The 53-residue stretch at 5–57 folds into the LIM zinc-binding 1 domain; that stretch reads CPKCDKTVYFAEKVSSLGKDWHKFCLKCERCNKTLTPGGHAEHDGKPFCHKPC. K23 bears the N6-acetyllysine mark. S104 bears the Phosphoserine mark. In terms of domain architecture, LIM zinc-binding 2 spans 126-178; that stretch reads CPRCNKRVYFAEKVTSLGKDWHRPCLRCERCSKTLTPGGHAEHDGQPYCHKPC. N6-acetyllysine occurs at positions 138 and 144.

As to quaternary structure, interacts with TGFB1I1. As to expression, expressed more abundantly in liver and kidney of females than that of males. Equally expressed in brain, lung and heart.

In Rattus norvegicus (Rat), this protein is Cysteine-rich protein 2 (Crip2).